We begin with the raw amino-acid sequence, 395 residues long: S-adenosylmethionine synthase (395 aa).

Residue His-16 participates in ATP binding. Asp-18 lines the Mg(2+) pocket. Glu-44 provides a ligand contact to K(+). L-methionine is bound by residues Glu-57 and Gln-100. The flexible loop stretch occupies residues Gln-100–Arg-110. Residues Asp-167–Lys-169, Arg-233–Phe-234, Asp-242, Arg-248–Lys-249, Ala-265, and Lys-269 each bind ATP. Asp-242 is a binding site for L-methionine. Lys-273 contacts L-methionine.

It belongs to the AdoMet synthase family. In terms of assembly, homotetramer; dimer of dimers. Mg(2+) is required as a cofactor. It depends on K(+) as a cofactor.

It is found in the cytoplasm. It carries out the reaction L-methionine + ATP + H2O = S-adenosyl-L-methionine + phosphate + diphosphate. The protein operates within amino-acid biosynthesis; S-adenosyl-L-methionine biosynthesis; S-adenosyl-L-methionine from L-methionine: step 1/1. Functionally, catalyzes the formation of S-adenosylmethionine (AdoMet) from methionine and ATP. The overall synthetic reaction is composed of two sequential steps, AdoMet formation and the subsequent tripolyphosphate hydrolysis which occurs prior to release of AdoMet from the enzyme. In Burkholderia vietnamiensis (strain G4 / LMG 22486) (Burkholderia cepacia (strain R1808)), this protein is S-adenosylmethionine synthase.